The sequence spans 392 residues: Obg-like ATPase 1 (392 aa).

One can recognise an OBG-type G domain in the interval 21–285 (LKTGIVGMPN…FTEEEAIEEC (265 aa)). 30-35 (NVGKST) is a binding site for ATP. Mg(2+) is bound by residues S34 and T55. Position 233 (M233) interacts with ATP. The 84-residue stretch at 306–389 (NLINYFTCGE…ESGDIAHWKA (84 aa)) folds into the TGS domain.

Belongs to the TRAFAC class OBG-HflX-like GTPase superfamily. OBG GTPase family. YchF/OLA1 subfamily. As to quaternary structure, monomer. The cofactor is Mg(2+).

It localises to the cytoplasm. It is found in the nucleus. Hydrolyzes ATP, and can also hydrolyze GTP with lower efficiency. Has lower affinity for GTP. Negatively regulates the G2/M transition in the cell cycle. This Schizosaccharomyces pombe (strain 972 / ATCC 24843) (Fission yeast) protein is Obg-like ATPase 1.